The chain runs to 475 residues: Sulfate adenylyltransferase subunit 1 (475 aa).

The tr-type G domain maps to 25–240 (KSLLRFLTCG…VLETVEVINL (216 aa)). Residues 34–41 (GSVDDGKS) form a G1 region. 34–41 (GSVDDGKS) lines the GTP pocket. Residues 92–96 (GITID) are G2. The tract at residues 113-116 (DTPG) is G3. Residues 113-117 (DTPGH) and 168-171 (NKMD) each bind GTP. The G4 stretch occupies residues 168–171 (NKMD). Residues 206 to 208 (SAL) are G5.

Belongs to the TRAFAC class translation factor GTPase superfamily. Classic translation factor GTPase family. CysN/NodQ subfamily. Heterodimer composed of CysD, the smaller subunit, and CysN.

The enzyme catalyses sulfate + ATP + H(+) = adenosine 5'-phosphosulfate + diphosphate. Its pathway is sulfur metabolism; hydrogen sulfide biosynthesis; sulfite from sulfate: step 1/3. In terms of biological role, with CysD forms the ATP sulfurylase (ATPS) that catalyzes the adenylation of sulfate producing adenosine 5'-phosphosulfate (APS) and diphosphate, the first enzymatic step in sulfur assimilation pathway. APS synthesis involves the formation of a high-energy phosphoric-sulfuric acid anhydride bond driven by GTP hydrolysis by CysN coupled to ATP hydrolysis by CysD. This Sodalis glossinidius (strain morsitans) protein is Sulfate adenylyltransferase subunit 1.